The chain runs to 385 residues: Aldehyde dehydrogenase family 3 member B2 (385 aa).

107–112 (GSPRVG) provides a ligand contact to NAD(+). Active-site residues include Glu-129 and Cys-163. Position 382 is a cysteine methyl ester (Cys-382). Cys-382 carries S-geranylgeranyl cysteine lipidation. Positions 383-385 (TLL) are cleaved as a propeptide — removed in mature form.

The protein belongs to the aldehyde dehydrogenase family. Post-translationally, geranylgeranylation is important for localization to lipid droplets and enzyme activity. In terms of tissue distribution, salivary gland. Expressed at protein level in placenta.

It is found in the lipid droplet. The enzyme catalyses an aldehyde + NAD(+) + H2O = a carboxylate + NADH + 2 H(+). It carries out the reaction a long-chain fatty aldehyde + NAD(+) + H2O = a long-chain fatty acid + NADH + 2 H(+). It catalyses the reaction a medium-chain fatty aldehyde + NAD(+) + H2O = a medium-chain fatty acid + NADH + 2 H(+). The catalysed reaction is hexadecanoate + NADH + 2 H(+) = hexadecanal + NAD(+) + H2O. The enzyme catalyses octanal + NAD(+) + H2O = octanoate + NADH + 2 H(+). The protein operates within alcohol metabolism; ethanol degradation; acetate from ethanol: step 2/2. In terms of biological role, oxidizes medium and long chain fatty aldehydes in lipid droplets into non-toxic fatty acids. This Homo sapiens (Human) protein is Aldehyde dehydrogenase family 3 member B2 (ALDH3B2).